The following is a 447-amino-acid chain: MYKQSWELLGNGQHADLTVAYINARIIDPESKLDIRGSLLTKGDKIIDFGPDLFANGIPSTIDEVIDCNNNILLPGLIDIHVHFREPGQEHKETINTGSKSAAAGGITTVVCQPNTIPTISSVITAKYIKMRALESAYVNIEFYASITKSDNSLSDMALLKEVGAVGFTDDGMPVMNALTMRQALSYSSMLDTVIAQHAEDLNISNNGCINEGIISYELGLKGIPDISESIIVNRDIALMKNIKNVHYHILHVSSQESLHIIKQAKSQGLKVTCEVTPHHFTLTERDIMTHGSLAKMNPPLRTENDRLSMIEGLKSGIIDCIATDHAPHDINAKELPLDTAAFGIVGLETMLPISLELYHNGTMPLIDLLATLTYKPADIIKVPRGRIKKDYVADLIILDLDHEWVVDISKFASKSKNSPFHNRKVKGKVLRTIVSGKTTYKAEIII.

Zn(2+) contacts are provided by histidine 81 and histidine 83. Substrate contacts are provided by residues 83–85 and asparagine 115; that span reads HFR. The Zn(2+) site is built by aspartate 171, histidine 198, and histidine 252. Substrate is bound at residue asparagine 298. Aspartate 325 serves as a coordination point for Zn(2+). Residue aspartate 325 is part of the active site. Residues histidine 329 and 343–344 each bind substrate; that span reads FG.

It belongs to the metallo-dependent hydrolases superfamily. DHOase family. Class I DHOase subfamily. It depends on Zn(2+) as a cofactor.

The catalysed reaction is (S)-dihydroorotate + H2O = N-carbamoyl-L-aspartate + H(+). It participates in pyrimidine metabolism; UMP biosynthesis via de novo pathway; (S)-dihydroorotate from bicarbonate: step 3/3. Functionally, catalyzes the reversible cyclization of carbamoyl aspartate to dihydroorotate. The chain is Dihydroorotase from Ehrlichia chaffeensis (strain ATCC CRL-10679 / Arkansas).